Here is a 384-residue protein sequence, read N- to C-terminus: Adaptive-response sensory kinase SasA (384 aa).

Residues 162 to 384 (MLAHDLRSPL…SFHFTLPVYR (223 aa)) enclose the Histidine kinase domain. The residue at position 165 (His165) is a Phosphohistidine; by autocatalysis.

Homooligomerizes. Interacts with KaiC. Participates in the KaiABC clock complex, whose core is composed of a KaiC homohexamer, 6 KaiB and up to 6 KaiA dimers. SasA and KaiB(fs) compete to bind to KaiC.

It catalyses the reaction ATP + protein L-histidine = ADP + protein N-phospho-L-histidine.. Member of the two-component regulatory system SasA/RpaA involved in genome-wide circadian gene expression. One of several clock output pathways. Participates in the Kai clock protein complex, the main circadian regulator in cyanobacteria, via its interaction with KaiC. KaiC enhances the autophosphorylation activity of SasA, which then transfers its phosphate group to RpaA to activate it. In addition to its output function, recruits fold-shifted KaiB (KaiB(fs)) to KaiC to cooperatively form the KaiB(6):KaiC(6) complex (independent of SasA kinase activity). Required for robustness of the circadian rhythm of gene expression and is involved in clock output, also required for adaptation to light/dark cycles. The protein is Adaptive-response sensory kinase SasA of Microcystis aeruginosa (strain NIES-843 / IAM M-2473).